We begin with the raw amino-acid sequence, 412 residues long: Putative competence-damage inducible protein (412 aa).

This sequence belongs to the CinA family.

In Bacillus cereus (strain B4264), this protein is Putative competence-damage inducible protein.